The chain runs to 512 residues: mRNA export factor (512 aa).

A disordered region spans residues 1 to 242 (MATDIDMLID…PVPERKAPSA (242 aa)). The Nuclear export signal signature appears at 5–17 (IDMLIDLGLDLSD). S16 and S18 each carry phosphoserine; by host. Composition is skewed to acidic residues over residues 16–28 (SDSELEEDALERD) and 36–55 (PESDSSGECSSSDEDMEDPC). The interval 104–112 (VWSRLGTRR) is interaction with host ALYREF. Positions 110–138 (TRRSASPREPHGGKVARIQPPSTKAPHPR) match the Nuclear localization signal motif. S113 carries the post-translational modification Phosphoserine; by host. Over residues 135–149 (PHPRGGRRGRRRGRG) the composition is skewed to basic residues. At R138 the chain carries Dimethylated arginine; by host. The RGG-box stretch occupies residues 138–152 (RGGRRGRRRGRGRYG). Residue R148 is modified to Omega-N-methylarginine; by host. Dimethylated arginine; by host is present on R150. A compositionally biased stretch (basic and acidic residues) spans 228–240 (ADGRAPVPERKAP). C400, H479, C483, and C488 together coordinate Zn(2+). The CHC2-type zinc-finger motif lies at 400-488 (CYLKARGLCG…HRQECSSRVC (89 aa)).

It belongs to the HHV-1 ICP27 protein family. Interacts with host RBP1; this interaction facilitates the RNA polymerase recruitment to viral transcription sites. Interacts (via the RGG box) with host ALYREF/THOC4; this interaction recruits ALYREF to viral replication compartments and probably directs viral mRNA to the TAP/NFX1 pathway. Interacts (via the RGG box) with host SRPK1; this interaction relocalizes SRPK1 to the nucleus and seems to alter its activity. Interacts with ICP4; this interaction modulates ICP4 DNA-binding activity. Interacts with host NXF1; this interaction allows efficient export of HSV-1 early and late transcripts. Interacts with host IRF3; this interaction inhibits IRF3 phosphorylation and nuclear translocation. Methylated within the RGG box possibly by host PRMT1. When hypomethylated, ICP27 is exported to the cytoplasm earlier and more rapidly. In terms of processing, phosphorylated.

It localises to the host cytoplasm. The protein resides in the host nucleus. Multifunctional regulator of the expression of viral genes that contributes to the shutoff of host protein synthesis and mediates nuclear export of viral intronless mRNAs. Also stimulates translation of viral transcripts. Independently, plays a role in the regulation of virion release. Also plays a role in the inhibition of host innate immune response by targeting host IRF3 and thereby preventing production of beta-interferon. Silences the 3' splice site of the host promyelocytic leukemia (PML) intron 7a, thereby switching PML isoforms from PML-II to PML-V. This could be linked to the accelerated mRNA export induced by ICP27 which might not provide sufficient time for PML pre-mRNA to be spliced in the nucleus. Also suppresses splicing of the viral ICP34.5 mRNA, allowing the virus to express a variant form of ICP34.5. In Human herpesvirus 2 (strain HG52) (HHV-2), this protein is mRNA export factor.